Here is a 727-residue protein sequence, read N- to C-terminus: Probable acyl-activating enzyme 18, peroxisomal (727 aa).

Residues 725–727 (SRI) carry the Microbody targeting signal motif.

This sequence belongs to the ATP-dependent AMP-binding enzyme family. As to expression, expressed in flowers.

The protein localises to the peroxisome. May be involved in the peroxisomal activation of 2,4-dichlorophenoxybutyric acid (2,4-DB), a precursor of active auxins that inhibit root growth. This Arabidopsis thaliana (Mouse-ear cress) protein is Probable acyl-activating enzyme 18, peroxisomal (AAE18).